An 876-amino-acid chain; its full sequence is AP-5 complex subunit beta-1 (876 aa).

Probably part of the adaptor protein complex 5 (AP-5), a tetramer composed of AP5B1, AP5M1, AP5S1 and AP5Z1. Interacts with ZFYVE26 and SPG11.

As part of AP-5, a probable fifth adaptor protein complex it may be involved in endosomal transport. This Mus musculus (Mouse) protein is AP-5 complex subunit beta-1 (Ap5b1).